Reading from the N-terminus, the 33-residue chain is Cytochrome b6-f complex subunit 8 (33 aa).

The helical transmembrane segment at 2–22 (LFTFAWASLAAIFTFSIAMVV) threads the bilayer.

It belongs to the PetN family. In terms of assembly, the 4 large subunits of the cytochrome b6-f complex are cytochrome b6, subunit IV (17 kDa polypeptide, PetD), cytochrome f and the Rieske protein, while the 4 small subunits are PetG, PetL, PetM and PetN. The complex functions as a dimer.

It is found in the cellular thylakoid membrane. Component of the cytochrome b6-f complex, which mediates electron transfer between photosystem II (PSII) and photosystem I (PSI), cyclic electron flow around PSI, and state transitions. In Prochlorococcus marinus (strain MIT 9211), this protein is Cytochrome b6-f complex subunit 8.